The primary structure comprises 401 residues: LysM domain-containing GPI-anchored protein LYP4 (401 aa).

A signal peptide spans 1 to 23 (MPPPLLLLLLLAAAAAAVAPARS). 4 disulfide bridges follow: cysteine 30–cysteine 96, cysteine 36–cysteine 162, cysteine 94–cysteine 160, and cysteine 96–cysteine 162. LysM domains lie at 106–156 (VRYV…TLFV) and 175–218 (LTYV…IIVV). Cystine bridges form between cysteine 223–cysteine 255 and cysteine 250–cysteine 279. An N-linked (GlcNAc...) asparagine glycan is attached at asparagine 240. N-linked (GlcNAc...) asparagine glycans are attached at residues asparagine 281, asparagine 288, and asparagine 310. The GPI-anchor amidated serine moiety is linked to residue serine 373. A propeptide spans 374–401 (SGPPPAGRHVVGDVLGAFALCLVGNLLW) (removed in mature form).

As to quaternary structure, interacts with LYP6. Interacts with CEBIP. Interacts with CERK1. In terms of tissue distribution, expressed in roots and leaves.

Its subcellular location is the cell membrane. Its function is as follows. Functions in innate immunity. Functions as a pattern recognition receptor (PRR), sensing bacterial peptidoglycan (PGN) and fungal chitin at the cell surface. Involved in resistance against the bacterial pathogen Xanthomonas oryzae pv. oryzae (Xoo) and the fungal pathogen Magnaporthe oryzae. Binds PGN and fungal chitin in vitro. Involved in microbe-associated molecular patterns (MAMPs) perception and participates in the activation of defense genes against the bacterial pathogen Xanthomonas oryzae pv. oryzicola (Xoc) or the fungal pathogen Magnaporthe oryzae. This chain is LysM domain-containing GPI-anchored protein LYP4, found in Oryza sativa subsp. japonica (Rice).